Reading from the N-terminus, the 103-residue chain is Large ribosomal subunit protein uL23 (103 aa).

The protein belongs to the universal ribosomal protein uL23 family. As to quaternary structure, part of the 50S ribosomal subunit. Contacts protein L29, and trigger factor when it is bound to the ribosome.

In terms of biological role, one of the early assembly proteins it binds 23S rRNA. One of the proteins that surrounds the polypeptide exit tunnel on the outside of the ribosome. Forms the main docking site for trigger factor binding to the ribosome. The protein is Large ribosomal subunit protein uL23 of Prochlorococcus marinus (strain NATL1A).